A 203-amino-acid polypeptide reads, in one-letter code: Recombination protein RecR (203 aa).

The C4-type zinc finger occupies 56 to 71 (CSVCGNVSDEERCRIC). In terms of domain architecture, Toprim spans 79–179 (SLVCVVEEPK…TVTRIASGLP (101 aa)).

Belongs to the RecR family.

In terms of biological role, may play a role in DNA repair. It seems to be involved in an RecBC-independent recombinational process of DNA repair. It may act with RecF and RecO. The protein is Recombination protein RecR of Mycolicibacterium smegmatis (strain ATCC 700084 / mc(2)155) (Mycobacterium smegmatis).